A 161-amino-acid chain; its full sequence is RNA pyrophosphohydrolase (161 aa).

The region spanning 12 to 154 (PYRPGVGMMI…KRKLYQAVVK (143 aa)) is the Nudix hydrolase domain. The Nudix box motif lies at 46-67 (GGIVPGETPSIAAMREMLEEIG).

The protein belongs to the Nudix hydrolase family. RppH subfamily. Requires a divalent metal cation as cofactor.

Its function is as follows. Accelerates the degradation of transcripts by removing pyrophosphate from the 5'-end of triphosphorylated RNA, leading to a more labile monophosphorylated state that can stimulate subsequent ribonuclease cleavage. The chain is RNA pyrophosphohydrolase from Rickettsia rickettsii (strain Iowa).